A 431-amino-acid polypeptide reads, in one-letter code: MADTDDTATLRYPGGEIDLQIVHATEGADGIALGPLLAKTGHTTFDVGFANTAAAKSSITYIDGDAGILRYRGYPIDQLAEKSTFIEVCYLLIYGELPDTDQLAQFTGRIQRHTMLHEDLKRFFDGFPRNAHPMPVLSSVVNALSAYYQDALDPMDNGQVELSTIRLLAKLPTIAAYAYKKSVGQPFLYPDNSLTLVENFLRLTFGFPAEPYQADPEVVRALDMLFILHADHEQNCSTSTVRLVGSSRANLFTSISGGINALWGPLHGGANQAVLEMLEGIRDSGDDVSEFVRKVKNREAGVKLMGFGHRVYKNYDPRARIVKEQADKILAKLGGDDSLLGIAKELEEAALTDDYFIERKLYPNVDFYTGLIYRALGFPTRMFTVLFALGRLPGWIAHWREMHDEGDSKIGRPRQIYTGYTERDYVTIDAR.

Active-site residues include His309 and Asp366.

The protein belongs to the citrate synthase family. In terms of assembly, homohexamer.

It carries out the reaction oxaloacetate + acetyl-CoA + H2O = citrate + CoA + H(+). Its pathway is carbohydrate metabolism; tricarboxylic acid cycle; isocitrate from oxaloacetate: step 1/2. This Mycobacterium tuberculosis (strain CDC 1551 / Oshkosh) protein is Citrate synthase 1 (gltA2).